The primary structure comprises 140 residues: Large ribosomal subunit protein uL16 (140 aa).

Belongs to the universal ribosomal protein uL16 family. As to quaternary structure, part of the 50S ribosomal subunit.

Functionally, binds 23S rRNA and is also seen to make contacts with the A and possibly P site tRNAs. The protein is Large ribosomal subunit protein uL16 of Citrifermentans bemidjiense (strain ATCC BAA-1014 / DSM 16622 / JCM 12645 / Bem) (Geobacter bemidjiensis).